Consider the following 625-residue polypeptide: Pyriculol/pyriculariol biosynthesis cluster transcription factor 1 (625 aa).

Disordered stretches follow at residues 1–83 (MATE…ATQD) and 466–496 (PMSATTAPSPSEYNSPSFFSQAPENTPLPAS). Positions 46–59 (TPSPSTPANPNSAS) are enriched in low complexity. Positions 73–132 (KNQKRQRATQDQLTTLEQEFAKNPTPTATVRDRIAEEINMTERSVQIWFQNRRAKIKLMA) form a DNA-binding region, homeobox. Residues 467–496 (MSATTAPSPSEYNSPSFFSQAPENTPLPAS) are compositionally biased toward polar residues.

The protein localises to the nucleus. Its function is as follows. Transcriptional regulator; part of the gene cluster that mediates the biosynthesis of pyriculol and pyriculariol, two heptaketides that induce lesion formation upon application on rice leaves but are dispensable for pathogenicity. With TRF1, negatively regulates the expression of the gene cluster and the subsequent pyriculol and pyriculariol production. The protein is Pyriculol/pyriculariol biosynthesis cluster transcription factor 1 of Pyricularia oryzae (strain 70-15 / ATCC MYA-4617 / FGSC 8958) (Rice blast fungus).